We begin with the raw amino-acid sequence, 271 residues long: MSPLLGLRSELQDTCTSLGLMLSVVLLMGLARVVARQQLHRPVAHAFVLEFLATFQLCCCTHELQLLSEQHPAHPTWTLTLVYFFSLVHGLTLVGTSSNPCGVMMQMMLGGMSPETGAVRLLAQLVSALCSRYCTSALWSLGLTQYHVSERSFACKNPIRVDLLKAVITEAVCSFLFHSALLHFQEVRTKLRIHLLAALITFLVYAGGSLTGAVFNPALALSLHFMCFDEAFPQFFIVYWLAPSLGILLMILMFSFFLPWLHNNHTINKKE.

Residues 1–14 (MSPLLGLRSELQDT) are Cytoplasmic-facing. A helical membrane pass occupies residues 15–35 (CTSLGLMLSVVLLMGLARVVA). Residues 36-41 (RQQLHR) lie on the Lumenal side of the membrane. The helical transmembrane segment at 42–62 (PVAHAFVLEFLATFQLCCCTH) threads the bilayer. Over 63-74 (ELQLLSEQHPAH) the chain is Cytoplasmic. A helical transmembrane segment spans residues 75-95 (PTWTLTLVYFFSLVHGLTLVG). The Lumenal segment spans residues 96 to 163 (TSSNPCGVMM…ACKNPIRVDL (68 aa)). Residues 99–101 (NPC) carry the NPC motif. The chain crosses the membrane as a helical span at residues 164 to 184 (LKAVITEAVCSFLFHSALLHF). Topologically, residues 185–194 (QEVRTKLRIH) are cytoplasmic. Residues 195–215 (LLAALITFLVYAGGSLTGAVF) form a helical membrane-spanning segment. Positions 216–218 (NPA) match the NPA motif. At 216–234 (NPALALSLHFMCFDEAFPQ) the chain is on the lumenal side. Residues 235–255 (FFIVYWLAPSLGILLMILMFS) form a helical membrane-spanning segment. Topologically, residues 256–271 (FFLPWLHNNHTINKKE) are cytoplasmic.

Belongs to the MIP/aquaporin (TC 1.A.8) family. AQP11/AQP12 subfamily. Homodimer; disulfide-linked. Homotetramer. Can also form homomultimer. In terms of processing, not glycosylated. Detected in the sperm head and tail (at protein level). Expressed in subcutaneous adipocytes. Expressed in testis, kidney and ejaculated spermatozoa.

The protein resides in the endoplasmic reticulum membrane. It is found in the cytoplasmic vesicle membrane. The protein localises to the cell membrane. It catalyses the reaction H2O(in) = H2O(out). The catalysed reaction is glycerol(in) = glycerol(out). The enzyme catalyses H2O2(out) = H2O2(in). Channel protein that facilitates the transport of water, glycerol and hydrogen peroxide across membrane of cell or organelles guaranteeing intracellular homeostasis in several organes like liver, kidney and brain. In situation of stress, participates in endoplasmic reticulum (ER) homeostasis by regulating redox homeostasis through the transport of hydrogen peroxide across the endoplasmic reticulum membrane thereby regulating the oxidative stress through the NADPH oxidase 2 pathway. Plays a role by maintaining an environment suitable for translation or protein foldings in the ER lumen namely by participating in the PKD1 glycosylation processing resulting in regulation of PKD1 membrane trafficking thereby preventing the accumulation of unfolding protein in ER. Plays a role in the proximal tubule function by regulating its endosomal acidification. May play a role in postnatal kidney development. This is Aquaporin-11 from Homo sapiens (Human).